Consider the following 923-residue polypeptide: Probable ribosylation factor GTPase-activating protein cnt6 (923 aa).

S207 is subject to Phosphoserine. A compositionally biased stretch (basic and acidic residues) spans 444-455 (TTRRDKGREMHR). Residues 444 to 476 (TTRRDKGREMHRSQVIQTSGRPKSMAPPSPSPI) form a disordered region. In terms of domain architecture, PH spans 526–632 (KIFKEGLLLV…WIEAICEAAK (107 aa)). One can recognise an Arf-GAP domain in the interval 714 to 837 (NIFIQMLRKT…AFIDFAGVDA (124 aa)). The C4-type zinc finger occupies 730 to 754 (CADCGSVKDVTWCSINIPVVLCIEC).

It is found in the cytoplasm. It localises to the cell tip. Its function is as follows. GTPase-activating protein for the ADP ribosylation factor family. This chain is Probable ribosylation factor GTPase-activating protein cnt6 (cnt6), found in Schizosaccharomyces pombe (strain 972 / ATCC 24843) (Fission yeast).